Reading from the N-terminus, the 159-residue chain is Na(+)/H(+) antiporter subunit E1 (159 aa).

The next 4 membrane-spanning stretches (helical) occupy residues 1-21 (MAIQ…VTNS), 27-47 (FVLG…VLPG), 60-80 (LIIT…KIIL), and 101-121 (WQLV…VLGI).

This sequence belongs to the CPA3 antiporters (TC 2.A.63) subunit E family. May form a heterooligomeric complex that consists of seven subunits: mnhA1, mnhB1, mnhC1, mnhD1, mnhE1, mnhF1 and mnhG1.

The protein localises to the cell membrane. Mnh complex is a Na(+)/H(+) antiporter involved in Na(+) excretion. The protein is Na(+)/H(+) antiporter subunit E1 (mnhE1) of Staphylococcus epidermidis (strain ATCC 35984 / DSM 28319 / BCRC 17069 / CCUG 31568 / BM 3577 / RP62A).